Reading from the N-terminus, the 620-residue chain is MSFDIAKYPTLALVDSTQELRLLPKESLPKLCDELRRYLLDSVSRSSGHFASGLGTVELTVALHYVYNTPFDQLIWDVGHQAYPHKILTGRRDKIGTIRQKGGLHPFPWRGESEYDVLSVGHSSTSISAGIGIAVAAEKEGKNRRTVCVIGDGAITAGMAFEAMNHAGDIRPDMLVVLNDNEMSISENVGALNNHLAQLLSGKLYSSLREGGKKVFSGVPPIKELLKRTEEHIKGMVVPGTLFEELGFNYIGPVDGHDVLGLITTLKNMRDLKGPQFLHIMTKKGRGYEPAEKDPITFHAVPKFDPSSGCLPKSSGGLPSYSKIFGDWLCETAAKDNKLMAITPAMREGSGMVEFSRKFPDRYFDVAIAEQHAVTFAAGLAIGGYKPIVAIYSTFLQRAYDQVLHDVAIQKLPVLFAIDRAGIVGADGQTHQGAFDLSYLRCIPEMVIMTPSDENECRQMLYTGYHYNDGPSAVRYPRGNAVGVELTPLEKLPIGKGTVKRRGEKLAILNFGTLMPEAAKVAESLNATLVDMRFVKPLDETLILEMAASHEALVTVEENAIMGGAGSGVNEVLMAHRKPVPVLNIGLPDFFIPQGTQEEMRAELGLDAAGMEAKIKAWLA.

Residues H80 and G121–S123 each bind thiamine diphosphate. Residue D152 participates in Mg(2+) binding. Thiamine diphosphate contacts are provided by residues G153–A154, N181, Y288, and E370. Residue N181 coordinates Mg(2+).

It belongs to the transketolase family. DXPS subfamily. Homodimer. It depends on Mg(2+) as a cofactor. The cofactor is thiamine diphosphate.

The catalysed reaction is D-glyceraldehyde 3-phosphate + pyruvate + H(+) = 1-deoxy-D-xylulose 5-phosphate + CO2. It participates in metabolic intermediate biosynthesis; 1-deoxy-D-xylulose 5-phosphate biosynthesis; 1-deoxy-D-xylulose 5-phosphate from D-glyceraldehyde 3-phosphate and pyruvate: step 1/1. In terms of biological role, catalyzes the acyloin condensation reaction between C atoms 2 and 3 of pyruvate and glyceraldehyde 3-phosphate to yield 1-deoxy-D-xylulose-5-phosphate (DXP). The sequence is that of 1-deoxy-D-xylulose-5-phosphate synthase from Shigella dysenteriae serotype 1 (strain Sd197).